Reading from the N-terminus, the 203-residue chain is SPbeta prophage-derived uncharacterized lipoprotein YonS (203 aa).

An N-terminal signal peptide occupies residues methionine 1–alanine 21. Residue cysteine 22 is the site of N-palmitoyl cysteine attachment. A lipid anchor (S-diacylglycerol cysteine) is attached at cysteine 22. The span at glutamate 27–serine 46 shows a compositional bias: low complexity. Residues glutamate 27 to valine 57 form a disordered region.

It localises to the cell membrane. The polypeptide is SPbeta prophage-derived uncharacterized lipoprotein YonS (yonS) (Bacillus subtilis (strain 168)).